The following is a 471-amino-acid chain: Nitrosourea synthase (471 aa).

The HO-like stretch occupies residues 177–328 (MWLVQFAPDF…GRMAREKIIK (152 aa)). Residues Glu-189, Glu-215, His-225, Glu-281, His-311, Asp-315, His-318, His-407, His-409, and His-448 each contribute to the Fe(2+) site. The tract at residues 397–459 (VEPRGELSNT…ANIESDECVY (63 aa)) is cupin.

As to quaternary structure, homodimer. It depends on Fe(2+) as a cofactor.

The enzyme catalyses N(omega)-methyl-L-arginine + 2 NADH + 3 O2 + H(+) = N(delta)-hydroxy-N(omega)-methyl-N(omega)-nitroso-L-citrulline + 2 NAD(+) + 3 H2O. It catalyses the reaction N(omega)-methyl-L-arginine + NADH + O2 + H(+) = N(delta)-hydroxy-N(omega)-methyl-L-arginine + NAD(+) + H2O. The catalysed reaction is N(delta)-hydroxy-N(omega)-methyl-L-arginine + NADH + O2 = N(delta),N(omega')-dihydroxy-N(omega)-methyl-L-arginine + NAD(+) + H2O. It carries out the reaction N(delta),N(omega')-dihydroxy-N(omega)-methyl-L-arginine + O2 = N(delta)-hydroxy-N(omega)-methyl-N(omega)-nitroso-L-citrulline + H2O. The enzyme catalyses 2 N(delta)-hydroxy-N(omega)-methyl-N(omega)-nitroso-L-citrulline + AH2 = 2 N(delta)-hydroxy-N(omega)-methyl-L-citrulline + 2 nitric oxide + A. The protein operates within antibiotic biosynthesis. In terms of biological role, involved in the biosynthesis of the glucosamine-nitrosourea antibiotic streptozotocin (SZN). Catalyzes a complex multi-step reaction: the overall reaction is an oxidative rearrangement of the guanidine group of N(omega)-methyl-L-arginine (L-NMA), generating an N-nitrosourea product. SznF first hydroxylates L-NMA to form N(delta)-hydroxy-N(omega)-methyl-L-arginine (L-HMA), which is further hydroxylated to give N(delta)-hydroxy-N(omega)-hydroxy-N(omega)-methyl-L-arginine (L-DHMA). Subsequently, an oxidative rearrangement converts this intermediate to N(delta)-hydroxy-N(omega)-methyl-N(omega)-nitroso-L-citrulline. This product is unstable, and degrades non-enzymically into nitric oxide and the denitrosated product N(delta)-hydroxy-N(omega)-methyl-L-citrulline. The chain is Nitrosourea synthase from Streptomyces achromogenes subsp. streptozoticus.